Consider the following 326-residue polypeptide: ELAV-like protein 1 (326 aa).

3 consecutive RRM domains span residues Thr-20 to Pro-98, Ala-106 to Asn-186, and Trp-244 to Ser-322.

This sequence belongs to the RRM elav family. In terms of assembly, interacts (via RRM3) with cirbp. Unable to form oligomers. Part of a ribonucleoprotein (RNP) complex, at least composed of elavl1/elrA and/or elavl2/elrB, igf2bp3/vg1RBP, ddx6/Xp54, ybx2/frgy2, lsm14b/rap55b and, in a subset of RNP complexes, stau1/staufen.

The protein resides in the cytoplasm. Its subcellular location is the cell cortex. Functionally, RNA-binding protein that binds to the 3'-UTR region of mRNAs and increases their stability. Involved in embryonic stem cells (ESCs) differentiation: preferentially binds mRNAs that are not methylated by N6-methyladenosine (m6A), stabilizing them, promoting ESCs differentiation. Binds to poly-U elements and AU-rich elements (AREs) in the 3'-UTR of target mRNAs. Acts cooperatively with cribp to stabilize AU-rich sequence (ARE)-containing mRNAs. May play a role during gastrulation. Required for the vegetal localization of vg1 mRNA. The protein is ELAV-like protein 1 of Xenopus tropicalis (Western clawed frog).